Consider the following 319-residue polypeptide: Methyltransferase tpcM (319 aa).

The interval 63 to 155 (DVGAGIGPYA…QLRPGGTFAC (93 aa)) is methyltransferase domain.

The protein belongs to the methyltransferase superfamily. In terms of tissue distribution, specifically expressed in conidia.

Its pathway is secondary metabolite biosynthesis. In terms of biological role, methyltransferase; part of the gene cluster that mediates the biosynthesis of trypacidin, a mycotoxin with antiprotozoal activity and that plays a role in the infection process. The pathway begins with the synthesis of atrochrysone thioester by the polyketide synthase (PKS) tpcC. The atrochrysone carboxyl ACP thioesterase tpcB then breaks the thioester bond and releases the atrochrysone carboxylic acid from tpcC. The decarboxylase tpcK converts atrochrysone carboxylic acid to atrochrysone which is further reduced into emodin anthrone. The next step is performed by the emodin anthrone oxygenase tpcL that catalyzes the oxidation of emodinanthrone to emodin. Emodin O-methyltransferase encoded by tpcA catalyzes methylation of the 8-hydroxy group of emodin to form questin. Ring cleavage of questin by questin oxidase tpcI leads to desmethylsulochrin via several intermediates including questin epoxide. Another methylation step catalyzed by tpcM leads to the formation of sulochrin which is further converted to monomethylsulfochrin by tpcH. Finally, the tpcJ catalyzes the conversion of monomethylsulfochrin to trypacidin. Trypacidin is toxic for human pulmonary and bronchial epithelial cells by initiating the intracellular formation of nitric oxide (NO) and hydrogen peroxide (H(2)O(2)), thus triggering host necrotic cell death. The trypacidin pathway is also able to produce endocrocin via a distinct route from the endocrocin Enc pathway. The chain is Methyltransferase tpcM from Aspergillus fumigatus (strain ATCC MYA-4609 / CBS 101355 / FGSC A1100 / Af293) (Neosartorya fumigata).